A 1290-amino-acid chain; its full sequence is DNA-directed RNA polymerase subunit beta' (1290 aa).

Zn(2+) is bound by residues Cys-60, Cys-62, Cys-75, and Cys-78. Mg(2+) is bound by residues Asp-535, Asp-537, and Asp-539. Cys-875, Cys-953, Cys-960, and Cys-963 together coordinate Zn(2+).

It belongs to the RNA polymerase beta' chain family. In terms of assembly, the RNAP catalytic core consists of 2 alpha, 1 beta, 1 beta' and 1 omega subunit. When a sigma factor is associated with the core the holoenzyme is formed, which can initiate transcription. Mg(2+) serves as cofactor. It depends on Zn(2+) as a cofactor.

It catalyses the reaction RNA(n) + a ribonucleoside 5'-triphosphate = RNA(n+1) + diphosphate. DNA-dependent RNA polymerase catalyzes the transcription of DNA into RNA using the four ribonucleoside triphosphates as substrates. The protein is DNA-directed RNA polymerase subunit beta' of Nocardioides sp. (strain ATCC BAA-499 / JS614).